Reading from the N-terminus, the 551-residue chain is Dihydroxy-acid dehydratase (551 aa).

Mg(2+) is bound at residue Asp78. Cys119 is a binding site for [2Fe-2S] cluster. Mg(2+) is bound by residues Asp120 and Lys121. Position 121 is an N6-carboxylysine (Lys121). Position 191 (Cys191) interacts with [2Fe-2S] cluster. Glu441 contributes to the Mg(2+) binding site. Catalysis depends on Ser467, which acts as the Proton acceptor.

It belongs to the IlvD/Edd family. As to quaternary structure, homodimer. The cofactor is [2Fe-2S] cluster. Mg(2+) serves as cofactor.

The enzyme catalyses (2R)-2,3-dihydroxy-3-methylbutanoate = 3-methyl-2-oxobutanoate + H2O. The catalysed reaction is (2R,3R)-2,3-dihydroxy-3-methylpentanoate = (S)-3-methyl-2-oxopentanoate + H2O. Its pathway is amino-acid biosynthesis; L-isoleucine biosynthesis; L-isoleucine from 2-oxobutanoate: step 3/4. The protein operates within amino-acid biosynthesis; L-valine biosynthesis; L-valine from pyruvate: step 3/4. In terms of biological role, functions in the biosynthesis of branched-chain amino acids. Catalyzes the dehydration of (2R,3R)-2,3-dihydroxy-3-methylpentanoate (2,3-dihydroxy-3-methylvalerate) into 2-oxo-3-methylpentanoate (2-oxo-3-methylvalerate) and of (2R)-2,3-dihydroxy-3-methylbutanoate (2,3-dihydroxyisovalerate) into 2-oxo-3-methylbutanoate (2-oxoisovalerate), the penultimate precursor to L-isoleucine and L-valine, respectively. The chain is Dihydroxy-acid dehydratase from Pyrococcus furiosus (strain ATCC 43587 / DSM 3638 / JCM 8422 / Vc1).